The sequence spans 22 residues: Hemoglobinase-like protein 2 (22 aa).

It belongs to the peptidase C13 family.

The enzyme catalyses Hydrolysis of proteins and small molecule substrates at -Asn-|-Xaa- bonds.. The polypeptide is Hemoglobinase-like protein 2 (Fasciola hepatica (Liver fluke)).